The sequence spans 102 residues: MAGQKIRIRLKAYDHEVIDKSARRIVETVTRTGAQVAGPVPLPTEKNVYCVIRSPHKYKDSREHFEMRTHKRLIDIIDPTPKTVDSLMRLDLPAGVDIEIKL.

This sequence belongs to the universal ribosomal protein uS10 family. In terms of assembly, part of the 30S ribosomal subunit.

In terms of biological role, involved in the binding of tRNA to the ribosomes. The sequence is that of Small ribosomal subunit protein uS10 from Thermobifida fusca (strain YX).